Here is a 253-residue protein sequence, read N- to C-terminus: Major prion protein (253 aa).

Residues 1 to 22 (MANLGCWMLVLFVATWSDLGLC) form the signal peptide. The tract at residues 23–230 (KKRPKPGGWN…ESQAYYQRGS (208 aa)) is interaction with GRB2, ERI3 and SYN1. The disordered stretch occupies residues 26–108 (PKPGGWNTGG…WNKPSKPKTS (83 aa)). A run of 5 repeats spans residues 51–59 (PQGGGGWGQ), 60–67 (PHGGGWGQ), 68–75 (PHGGGWGQ), 76–83 (PHGGGWGQ), and 84–91 (PHGGGWGQ). The segment at 51–91 (PQGGGGWGQPHGGGWGQPHGGGWGQPHGGGWGQPHGGGWGQ) is 5 X 8 AA tandem repeats of P-H-G-G-G-W-G-Q. Positions 52-95 (QGGGGWGQPHGGGWGQPHGGGWGQPHGGGWGQPHGGGWGQGGGT) are enriched in gly residues. H61, G62, G63, H69, G70, G71, H77, G78, G79, H85, G86, and G87 together coordinate Cu(2+). A disulfide bridge links C179 with C214. N-linked (GlcNAc...) asparagine glycosylation is found at N181 and N197. S230 carries the GPI-anchor amidated serine lipid modification. The propeptide at 231 to 253 (SMVFFSSPPVILLISFLIFLIVG) is removed in mature form.

This sequence belongs to the prion family. As to quaternary structure, monomer and homodimer. Has a tendency to aggregate into amyloid fibrils containing a cross-beta spine, formed by a steric zipper of superposed beta-strands. Soluble oligomers may represent an intermediate stage on the path to fibril formation. Copper binding may promote oligomerization. Interacts with GRB2, APP, ERI3/PRNPIP and SYN1. Mislocalized cytosolically exposed PrP interacts with MGRN1; this interaction alters MGRN1 subcellular location and causes lysosomal enlargement. Interacts with KIAA1191.

It is found in the cell membrane. The protein localises to the golgi apparatus. Functionally, its primary physiological function is unclear. Has cytoprotective activity against internal or environmental stresses. May play a role in neuronal development and synaptic plasticity. May be required for neuronal myelin sheath maintenance. May play a role in iron uptake and iron homeostasis. Soluble oligomers are toxic to cultured neuroblastoma cells and induce apoptosis (in vitro). Association with GPC1 (via its heparan sulfate chains) targets PRNP to lipid rafts. Also provides Cu(2+) or Zn(2+) for the ascorbate-mediated GPC1 deaminase degradation of its heparan sulfate side chains. This is Major prion protein (PRNP) from Trachypithecus francoisi (Francois' leaf monkey).